A 348-amino-acid chain; its full sequence is Fe-S cluster assembly protein DRE2 (348 aa).

Residues 1-185 (MSGEKSSLLL…KKPESPRASV (185 aa)) are N-terminal SAM-like domain. Disordered regions lie at residues 128–148 (QTAP…SKSL) and 162–213 (KKAE…TASK). Positions 186 to 241 (VAEDLDDGDELDGMNEDDSNSDELTASKSKFFDDVAGQDSADSIDEDDLVDDAEKS) are linker. Positions 188–206 (EDLDDGDELDGMNEDDSNS) are enriched in acidic residues. [2Fe-2S] cluster contacts are provided by C248, C259, C262, and C264. Residues 248-264 (CGKTKTRRRKACKDCTC) form a fe-S binding site A region. The [4Fe-4S] cluster site is built by C311, C314, C322, and C325. 2 consecutive short sequence motifs (cx2C motif) follow at residues 311-314 (CGSC) and 322-325 (CSGC). The tract at residues 311-325 (CGSCSLGDAFRCSGC) is fe-S binding site B.

This sequence belongs to the anamorsin family. As to quaternary structure, monomer. Interacts with TAH18. Interacts with MIA40. [2Fe-2S] cluster serves as cofactor. [4Fe-4S] cluster is required as a cofactor.

The protein localises to the cytoplasm. The protein resides in the mitochondrion intermembrane space. Its function is as follows. Component of the cytosolic iron-sulfur (Fe-S) protein assembly (CIA) machinery required for the maturation of extramitochondrial Fe-S proteins. Part of an electron transfer chain functioning in an early step of cytosolic Fe-S biogenesis, facilitating the de novo assembly of a [4Fe-4S] cluster on the scaffold complex CFD1-NBP35. Electrons are transferred to DRE2 from NADPH via the FAD- and FMN-containing protein TAH18. TAH18-DRE2 are also required for the assembly of the diferric tyrosyl radical cofactor of ribonucleotide reductase (RNR), probably by providing electrons for reduction during radical cofactor maturation in the catalytic small subunit RNR2. The protein is Fe-S cluster assembly protein DRE2 of Lachancea thermotolerans (strain ATCC 56472 / CBS 6340 / NRRL Y-8284) (Yeast).